The primary structure comprises 200 residues: NADH-quinone oxidoreductase subunit C (200 aa).

This sequence belongs to the complex I 30 kDa subunit family. NDH-1 is composed of 14 different subunits. Subunits NuoB, C, D, E, F, and G constitute the peripheral sector of the complex.

The protein localises to the cell inner membrane. The enzyme catalyses a quinone + NADH + 5 H(+)(in) = a quinol + NAD(+) + 4 H(+)(out). In terms of biological role, NDH-1 shuttles electrons from NADH, via FMN and iron-sulfur (Fe-S) centers, to quinones in the respiratory chain. The immediate electron acceptor for the enzyme in this species is believed to be ubiquinone. Couples the redox reaction to proton translocation (for every two electrons transferred, four hydrogen ions are translocated across the cytoplasmic membrane), and thus conserves the redox energy in a proton gradient. The protein is NADH-quinone oxidoreductase subunit C of Rhizobium johnstonii (strain DSM 114642 / LMG 32736 / 3841) (Rhizobium leguminosarum bv. viciae).